The primary structure comprises 375 residues: Quinolinate synthase (375 aa).

Residues His47 and Ser64 each contribute to the iminosuccinate site. Cys110 is a [4Fe-4S] cluster binding site. Residues 144 to 146 (YVN) and Ser165 contribute to the iminosuccinate site. A [4Fe-4S] cluster-binding site is contributed by Cys235. Residues 261–263 (HPE) and Thr278 each bind iminosuccinate. Cys325 contributes to the [4Fe-4S] cluster binding site.

Belongs to the quinolinate synthase family. Type 3 subfamily. [4Fe-4S] cluster is required as a cofactor.

It localises to the cytoplasm. It carries out the reaction iminosuccinate + dihydroxyacetone phosphate = quinolinate + phosphate + 2 H2O + H(+). Its pathway is cofactor biosynthesis; NAD(+) biosynthesis; quinolinate from iminoaspartate: step 1/1. Functionally, catalyzes the condensation of iminoaspartate with dihydroxyacetone phosphate to form quinolinate. The protein is Quinolinate synthase of Herpetosiphon aurantiacus (strain ATCC 23779 / DSM 785 / 114-95).